A 362-amino-acid chain; its full sequence is Phosphoserine aminotransferase (362 aa).

Arginine 42 provides a ligand contact to L-glutamate. Residues 76-77, tryptophan 102, threonine 152, aspartate 173, and glutamine 196 contribute to the pyridoxal 5'-phosphate site; that span reads AS. Lysine 197 is modified (N6-(pyridoxal phosphate)lysine). A pyridoxal 5'-phosphate-binding site is contributed by 238–239; it reads NT.

This sequence belongs to the class-V pyridoxal-phosphate-dependent aminotransferase family. SerC subfamily. As to quaternary structure, homodimer. Requires pyridoxal 5'-phosphate as cofactor.

It is found in the cytoplasm. It carries out the reaction O-phospho-L-serine + 2-oxoglutarate = 3-phosphooxypyruvate + L-glutamate. It catalyses the reaction 4-(phosphooxy)-L-threonine + 2-oxoglutarate = (R)-3-hydroxy-2-oxo-4-phosphooxybutanoate + L-glutamate. The protein operates within amino-acid biosynthesis; L-serine biosynthesis; L-serine from 3-phospho-D-glycerate: step 2/3. It functions in the pathway cofactor biosynthesis; pyridoxine 5'-phosphate biosynthesis; pyridoxine 5'-phosphate from D-erythrose 4-phosphate: step 3/5. In terms of biological role, catalyzes the reversible conversion of 3-phosphohydroxypyruvate to phosphoserine and of 3-hydroxy-2-oxo-4-phosphonooxybutanoate to phosphohydroxythreonine. The polypeptide is Phosphoserine aminotransferase (Chromobacterium violaceum (strain ATCC 12472 / DSM 30191 / JCM 1249 / CCUG 213 / NBRC 12614 / NCIMB 9131 / NCTC 9757 / MK)).